The following is a 619-amino-acid chain: E3 ubiquitin-protein ligase DTX4 (619 aa).

WWE domains are found at residues methionine 1–arginine 78 and asparagine 79–arginine 155. Disordered stretches follow at residues lysine 238–asparagine 281 and proline 358–threonine 389. Residues glutamine 261–serine 273 are compositionally biased toward polar residues. The segment covering lysine 378–glycine 387 has biased composition (basic residues). The RING-type; atypical zinc finger occupies cysteine 409–lysine 468.

Belongs to the Deltex family. In terms of assembly, interacts with NLRP4.

The protein resides in the cytoplasm. The catalysed reaction is S-ubiquitinyl-[E2 ubiquitin-conjugating enzyme]-L-cysteine + [acceptor protein]-L-lysine = [E2 ubiquitin-conjugating enzyme]-L-cysteine + N(6)-ubiquitinyl-[acceptor protein]-L-lysine.. It participates in protein modification; protein ubiquitination. Functionally, regulator of Notch signaling, a signaling pathway involved in cell-cell communications that regulates a broad spectrum of cell-fate determinations. Functions as a ubiquitin ligase protein in vivo, mediating 'Lys48'-linked polyubiquitination and promoting degradation of TBK1, targeting to TBK1 requires interaction with NLRP4. The sequence is that of E3 ubiquitin-protein ligase DTX4 (DTX4) from Homo sapiens (Human).